Consider the following 875-residue polypeptide: MMLPPKYDHRAVEANRYEWWLKGKFFEATSDETKKPFTIVIPPPNVTGKLHLGHAWDTTLQDIITRMKRMQGYDVLWLPGMDHAGIATQAKVEEKLRNEGKTRYDLGREKFVEETWKWKEEYAGHIRSQWAKLGLGLDYTRERFTLDEGLSKAVREVFVSLYKKGLIYRGEYIINWDPVTKTALSDIEVVYKDVQGALYHMRYPLADGSGYIEVATTRPETMLGDTAVAVHPEDERYKHLIGKTVILPIVGREIPIIGDEYVDMSFGSGAVKITPAHDPNDFEIGNRHHLPRILVMNEDGTMNDNALQYKGLDRFECRKQIVKDLQEQGVLFKIEEHMHSVGHSERSGAVVEPYLSTQWFVKMKPLAEAAIEQQKTEGKVNFVPERFEKTYLHWMENIRDWCISRQLWWGHRIPAWYHKETGEVYVDHEPPADIENWEQDQDVLDTWFSSALWPFSTMGWPDKTSADYNRYYPTDVLVTGYDIIFFWVSRMIFQALEFTGKRPFKDVLIHGLVRDAQGRKMSKSLGNGVDPMDVIDQYGADSLRYFLATGSSPGQDLRFSTEKVEATWNFVNKIWNASRFALMNMEGFTYEDIDLHGEKSVADHWILTRLNETIETVTKLADKYEFGEVGRVLYNFIWDDLCDWYIEMAKLPLYGDDEQAKKTTRSVLAYVLDQTMRLLHPFMPFVTEEIWQQLPHEGESITVASWPQVRPELSNHEAAETMRLLVDIIRAVRNIRAEVNTPLSKPITLYIKAKDEHVKATLETNRAYIERFCNPSELVIDTTIPTVEKAMTAVVTGAELSLPLEGLINIEEEVKRLEKELQKLDQEVERVQKKLSNEGFLAKAPAHVVEEERKKERDYIEKREAVRARLAQLKQ.

The 'HIGH' region motif lies at 44 to 54 (PNVTGKLHLGH). Residues 520 to 524 (KMSKS) carry the 'KMSKS' region motif. K523 serves as a coordination point for ATP. Residues 804-875 (LEGLINIEEE…VRARLAQLKQ (72 aa)) are a coiled coil.

This sequence belongs to the class-I aminoacyl-tRNA synthetase family. ValS type 1 subfamily. In terms of assembly, monomer.

The protein resides in the cytoplasm. It catalyses the reaction tRNA(Val) + L-valine + ATP = L-valyl-tRNA(Val) + AMP + diphosphate. Functionally, catalyzes the attachment of valine to tRNA(Val). As ValRS can inadvertently accommodate and process structurally similar amino acids such as threonine, to avoid such errors, it has a 'posttransfer' editing activity that hydrolyzes mischarged Thr-tRNA(Val) in a tRNA-dependent manner. The polypeptide is Valine--tRNA ligase (Anoxybacillus flavithermus (strain DSM 21510 / WK1)).